A 147-amino-acid chain; its full sequence is Large ribosomal subunit protein bL9 (147 aa).

A disordered region spans residues 44-63 (VKTLDAQKRSEDKRKEQEKL). Residues 48 to 63 (DAQKRSEDKRKEQEKL) show a composition bias toward basic and acidic residues.

This sequence belongs to the bacterial ribosomal protein bL9 family.

In terms of biological role, binds to the 23S rRNA. This is Large ribosomal subunit protein bL9 from Brevibacillus brevis (strain 47 / JCM 6285 / NBRC 100599).